The following is a 138-amino-acid chain: ATP synthase epsilon chain (138 aa).

It belongs to the ATPase epsilon chain family. In terms of assembly, F-type ATPases have 2 components, CF(1) - the catalytic core - and CF(0) - the membrane proton channel. CF(1) has five subunits: alpha(3), beta(3), gamma(1), delta(1), epsilon(1). CF(0) has three main subunits: a, b and c.

It localises to the cellular thylakoid membrane. In terms of biological role, produces ATP from ADP in the presence of a proton gradient across the membrane. The chain is ATP synthase epsilon chain from Microcystis aeruginosa (strain NIES-843 / IAM M-2473).